A 1369-amino-acid polypeptide reads, in one-letter code: Microtubule-associated tumor suppressor candidate 2 (1369 aa).

Disordered regions lie at residues 180-262 (ASSS…TQTV), 374-442 (GRGN…FIPN), 477-509 (GENKTEVPEPLDPQSGRSEARESKEVTTSVAEN), 582-627 (NTSP…EERT), 791-839 (RSSA…LRPP), 861-992 (SSVS…QARE), and 1331-1369 (WKLQTGDPTSPIKLSPTSPVYRGSSSGPSSPARVSTTPR). Composition is skewed to polar residues over residues 246–262 (PSTSESKQSTPSETQTV) and 392–401 (LHTTPKQGSA). Positions 641 to 980 (RPKIITYIRR…PKQRTAAARN (340 aa)) are mediates interaction with MAPRE1. The sufficient for interaction with KIF2C stretch occupies residues 801–890 (GPITTATSLY…TRSTFGNEEQ (90 aa)). Residues 801 to 1150 (GPITTATSLY…HDAALLEMEN (350 aa)) are localization to the growing distal tip of microtubules. A compositionally biased stretch (polar residues) spans 804-814 (TTATSLYSSDP). The span at 821–834 (ASSSNAAKSNLPKS) shows a compositional bias: low complexity. Positions 937–947 (TKKDAQKDQDT) are enriched in basic and acidic residues. The stretch at 991 to 1335 (REAERQLVLR…NEELLWKLQT (345 aa)) forms a coiled coil. A compositionally biased stretch (low complexity) spans 1348–1369 (SPVYRGSSSGPSSPARVSTTPR).

The protein in the C-terminal section; belongs to the MTUS1 family. In terms of assembly, homodimer. Interacts with KIF2C and MAPRE1; the interaction is direct and probably targets MTUS2 and KIF2C to microtubules. In terms of tissue distribution, detected in embryonic stem cells differentiating to cardiomyocytes.

It localises to the cytoplasm. Its subcellular location is the cytoskeleton. Binds microtubules. Together with MAPRE1 may target the microtubule depolymerase KIF2C to the plus-end of microtubules. May regulate the dynamics of microtubules at their growing distal tip. The protein is Microtubule-associated tumor suppressor candidate 2 (MTUS2) of Homo sapiens (Human).